Reading from the N-terminus, the 149-residue chain is Pleckstrin homology domain-containing family J member 1 (149 aa).

The PH domain occupies proline 15–tyrosine 108.

This chain is Pleckstrin homology domain-containing family J member 1 (PLEKHJ1), found in Gallus gallus (Chicken).